A 198-amino-acid polypeptide reads, in one-letter code: Small ribosomal subunit protein uS2 (198 aa).

It belongs to the universal ribosomal protein uS2 family.

The sequence is that of Small ribosomal subunit protein uS2 from Methanobrevibacter smithii (strain ATCC 35061 / DSM 861 / OCM 144 / PS).